Reading from the N-terminus, the 318-residue chain is Ribosomal RNA small subunit methyltransferase H (318 aa).

Residues 42-44 (GGH), aspartate 62, phenylalanine 86, aspartate 108, and glutamine 115 each bind S-adenosyl-L-methionine.

It belongs to the methyltransferase superfamily. RsmH family.

It localises to the cytoplasm. It carries out the reaction cytidine(1402) in 16S rRNA + S-adenosyl-L-methionine = N(4)-methylcytidine(1402) in 16S rRNA + S-adenosyl-L-homocysteine + H(+). Specifically methylates the N4 position of cytidine in position 1402 (C1402) of 16S rRNA. The polypeptide is Ribosomal RNA small subunit methyltransferase H (Yersinia pestis (strain Pestoides F)).